A 516-amino-acid polypeptide reads, in one-letter code: Multicopper oxidase CueO (516 aa).

Positions 1–28 (MQRRDFLKYSVALGVASALPLWSRAVFA) form a signal peptide, tat-type signal. 3 Plastocyanin-like domains span residues 55–165 (GQST…IEDD), 227–292 (PRGW…DNKP), and 399–516 (GGKF…GFTV). Cu cation is bound by residues His101, His103, His141, and His143. 7 residues coordinate Cu cation: His443, His446, His448, His499, Cys500, His501, and His505.

The protein belongs to the multicopper oxidase family. Monomer. Cu cation serves as cofactor. Post-translationally, predicted to be exported by the Tat system. The position of the signal peptide cleavage has not been experimentally proven.

It is found in the periplasm. It carries out the reaction 4 Cu(+) + O2 + 4 H(+) = 4 Cu(2+) + 2 H2O. Multicopper oxidase involved in copper homeostasis and copper tolerance under aerobic conditions. Is responsible for the oxidation of Cu(+) to the less harmful Cu(2+) in the periplasm, thereby preventing Cu(+) from entering the cytoplasm. The chain is Multicopper oxidase CueO (cueO) from Escherichia coli O157:H7.